The following is a 341-amino-acid chain: HTH-type transcriptional repressor PurR (341 aa).

The HTH lacI-type domain occupies alanine 2 to valine 56. The segment at residues isoleucine 4–asparagine 23 is a DNA-binding region (H-T-H motif). A DNA-binding region spans residues serine 48–valine 56. Tyrosine 73, arginine 190, threonine 192, phenylalanine 221, and aspartate 275 together coordinate hypoxanthine.

As to quaternary structure, homodimer.

Its pathway is purine metabolism; purine nucleotide biosynthesis [regulation]. Is the main repressor of the genes involved in the de novo synthesis of purine nucleotides, regulating purB, purC, purEK, purF, purHD, purL, purMN and guaBA expression. PurR is allosterically activated to bind its cognate DNA by binding the purine corepressors, hypoxanthine or guanine, thereby effecting transcription repression. This chain is HTH-type transcriptional repressor PurR, found in Yersinia enterocolitica serotype O:8 / biotype 1B (strain NCTC 13174 / 8081).